Here is a 97-residue protein sequence, read N- to C-terminus: Co-chaperonin GroES (97 aa).

Belongs to the GroES chaperonin family. Heptamer of 7 subunits arranged in a ring. Interacts with the chaperonin GroEL.

It is found in the cytoplasm. Together with the chaperonin GroEL, plays an essential role in assisting protein folding. The GroEL-GroES system forms a nano-cage that allows encapsulation of the non-native substrate proteins and provides a physical environment optimized to promote and accelerate protein folding. GroES binds to the apical surface of the GroEL ring, thereby capping the opening of the GroEL channel. The sequence is that of Co-chaperonin GroES from Buchnera aphidicola subsp. Tuberolachnus salignus.